Reading from the N-terminus, the 469-residue chain is E3 ubiquitin-protein ligase TRAIP (469 aa).

The RING-type zinc-finger motif lies at 7 to 50 (CTICSDFFDHSRDVAAIHCGHTFHLQCLIQWFETAPSRTCPQCR). 2 coiled-coil regions span residues 70-177 (EENV…QSQR) and 201-280 (CVSL…TLNL). An interaction with CYLD region spans residues 211 to 469 (LKEARKASGE…QAKLDTFLWS (259 aa)). A Glycyl lysine isopeptide (Lys-Gly) (interchain with G-Cter in SUMO2) cross-link involves residue Lys304. The PIP-box signature appears at 460-469 (QAKLDTFLWS).

It belongs to the TRAIP family. In terms of assembly, interacts (via PIP-box) with PCNA. Binds TRAF1, TRAF2, TRAF3, TRAF5 and TRAF6 is part of the receptor-TRAF signaling complex. May interact with CYLD; the C-terminus interacts with CYLD, however the interaction was not detected with the full-length protein. Interacts with POLK and POLN. Interacts with UIMC1. Post-translationally, sumoylated; sumoylation is required for nuclear localization. Sumoylation increases protein stability, possibly by preventing ubiquitination. In terms of processing, autoubiquitinated.

The protein localises to the nucleus. The protein resides in the nucleoplasm. It localises to the nucleolus. Its subcellular location is the chromosome. It is found in the cytoplasm. The protein localises to the perinuclear region. The enzyme catalyses S-ubiquitinyl-[E2 ubiquitin-conjugating enzyme]-L-cysteine + [acceptor protein]-L-lysine = [E2 ubiquitin-conjugating enzyme]-L-cysteine + N(6)-ubiquitinyl-[acceptor protein]-L-lysine.. The protein operates within protein modification; protein ubiquitination. In terms of biological role, E3 ubiquitin ligase required to protect genome stability in response to replication stress. Acts as a key regulator of interstrand cross-link repair, which takes place when both strands of duplex DNA are covalently tethered together, thereby blocking replication and transcription. Controls the choice between the two pathways of replication-coupled interstrand-cross-link repair by mediating ubiquitination of MCM7 subunit of the CMG helicase complex. Short ubiquitin chains on MCM7 promote recruitment of DNA glycosylase NEIL3. If the interstrand cross-link cannot be cleaved by NEIL3, the ubiquitin chains continue to grow on MCM7, promoting the unloading of the CMG helicase complex by the VCP/p97 ATPase, enabling the Fanconi anemia DNA repair pathway. Only catalyzes ubiquitination of MCM7 when forks converge. Also involved in the repair of covalent DNA-protein cross-links (DPCs) during DNA synthesis: promotes ubiquitination of DPCs, leading to their degradation by the proteasome. Has also been proposed to play a role in promoting translesion synthesis by mediating the assembly of 'Lys-63'-linked poly-ubiquitin chains on the Y-family polymerase POLN in order to facilitate bypass of DNA lesions and preserve genomic integrity. The function in translesion synthesis is however controversial. Acts as a regulator of the spindle assembly checkpoint. Also acts as a negative regulator of innate immune signaling by inhibiting activation of NF-kappa-B mediated by TNF. Negatively regulates TLR3/4- and RIG-I-mediated IRF3 activation and subsequent IFNB1 production and cellular antiviral response by promoting 'Lys-48'-linked polyubiquitination of TNK1 leading to its proteasomal degradation. This is E3 ubiquitin-protein ligase TRAIP from Homo sapiens (Human).